Consider the following 591-residue polypeptide: Aspartate--tRNA ligase (591 aa).

Residue E176 coordinates L-aspartate. The interval 200 to 203 is aspartate; the sequence is QILK. Residue R222 participates in L-aspartate binding. ATP is bound by residues 222–224 and Q231; that span reads RDE. H450 provides a ligand contact to L-aspartate. ATP is bound at residue E484. Residue R491 participates in L-aspartate binding. 536–539 is an ATP binding site; it reads GLDR.

This sequence belongs to the class-II aminoacyl-tRNA synthetase family. Type 1 subfamily. In terms of assembly, homodimer.

The protein localises to the cytoplasm. It carries out the reaction tRNA(Asp) + L-aspartate + ATP = L-aspartyl-tRNA(Asp) + AMP + diphosphate. Functionally, catalyzes the attachment of L-aspartate to tRNA(Asp) in a two-step reaction: L-aspartate is first activated by ATP to form Asp-AMP and then transferred to the acceptor end of tRNA(Asp). This chain is Aspartate--tRNA ligase, found in Listeria monocytogenes serotype 4a (strain HCC23).